The primary structure comprises 90 residues: Evasin P1126 (90 aa).

The first 25 residues, 1-25 (MTSHSAVRIAIFAVIALHSIFECLS), serve as a signal peptide directing secretion. 3 disulfide bridges follow: Cys-46–Cys-62, Cys-50–Cys-64, and Cys-58–Cys-75. Asn-55 carries N-linked (GlcNAc...) asparagine glycosylation. N-linked (GlcNAc...) asparagine glycosylation is present at Asn-77.

Its subcellular location is the secreted. Functionally, salivary chemokine-binding protein which binds to host chemokines CXCL1, CXCL2, CXCL3, CXCL4, CXCL5, CXCL6, CXCL7, CXCL10 and CXCL11. The chain is Evasin P1126 from Amblyomma cajennense (Cayenne tick).